The primary structure comprises 712 residues: Satratoxin biosynthesis SC3 cluster transcription factor SAT20 (712 aa).

4 stretches are compositionally biased toward polar residues: residues 1–10 (MPNLPGSSDS), 25–36 (CSSTKPNAAQEN), 131–145 (SEPS…WPSL), and 269–282 (SLPS…SSTG). Disordered stretches follow at residues 1-43 (MPNL…ELAQ), 115-145 (SQNA…WPSL), and 264-294 (PVSG…KADR). A DNA-binding region (zn(2)-C6 fungal-type) is located at residues 306-339 (CFRCRMYKENCDPGLPCKNCMRVQVTRRTFFGPC). A coiled-coil region spans residues 530-560 (QIQIMVAQVMLDKQKNALKRLQERALSKNRH).

The protein localises to the nucleus. Functionally, transcriptional regulator that may regulate the expression of the satratoxin biosynthesis SC3 cluster, one of the 3 clusters involved in the biosynthesis of satratoxins, trichothecene mycotoxins that are associated with human food poisonings. In Stachybotrys chartarum (strain CBS 109288 / IBT 7711) (Toxic black mold), this protein is Satratoxin biosynthesis SC3 cluster transcription factor SAT20.